The primary structure comprises 371 residues: Chaperone protein DnaJ (371 aa).

Residues 5–69 (DYYEVLGLSK…QKRAQYDQFG (65 aa)) form the J domain. The CR-type zinc finger occupies 133–215 (GKELNVEIPV…CHGSGKVRKR (83 aa)). The Zn(2+) site is built by Cys146, Cys149, Cys163, Cys166, Cys189, Cys192, Cys203, and Cys206. 4 CXXCXGXG motif repeats span residues 146-153 (CDTCKGSG), 163-170 (CKHCSGSG), 189-196 (CSHCSGTG), and 203-210 (CTTCHGSG).

It belongs to the DnaJ family. Homodimer. Requires Zn(2+) as cofactor.

The protein localises to the cytoplasm. Participates actively in the response to hyperosmotic and heat shock by preventing the aggregation of stress-denatured proteins and by disaggregating proteins, also in an autonomous, DnaK-independent fashion. Unfolded proteins bind initially to DnaJ; upon interaction with the DnaJ-bound protein, DnaK hydrolyzes its bound ATP, resulting in the formation of a stable complex. GrpE releases ADP from DnaK; ATP binding to DnaK triggers the release of the substrate protein, thus completing the reaction cycle. Several rounds of ATP-dependent interactions between DnaJ, DnaK and GrpE are required for fully efficient folding. Also involved, together with DnaK and GrpE, in the DNA replication of plasmids through activation of initiation proteins. The polypeptide is Chaperone protein DnaJ (Bacillus cereus (strain 03BB102)).